The primary structure comprises 448 residues: Asparagine--tRNA ligase (448 aa).

The protein belongs to the class-II aminoacyl-tRNA synthetase family. Homodimer.

Its subcellular location is the cytoplasm. It carries out the reaction tRNA(Asn) + L-asparagine + ATP = L-asparaginyl-tRNA(Asn) + AMP + diphosphate + H(+). This Streptococcus sanguinis (strain SK36) protein is Asparagine--tRNA ligase.